Here is a 244-residue protein sequence, read N- to C-terminus: Mitochondrial import inner membrane translocase subunit Tim21 (244 aa).

The N-terminal 18 residues, 1-18 (MICAFLRVVQHAEKLHGS), are a transit peptide targeting the mitochondrion. The disordered stretch occupies residues 65–96 (TQGPDPRKAKEDSTKQVSIRRNQREETGVSMS). A compositionally biased stretch (basic and acidic residues) spans 69-78 (DPRKAKEDST). The helical transmembrane segment at 107–127 (SYLIVVLFGVGLTGGLLYAIF) threads the bilayer.

It belongs to the TIM21 family. In terms of assembly, component of the TIM23 complex. Component of the MITRAC (mitochondrial translation regulation assembly intermediate of cytochrome c oxidase complex) complex, the core components of this complex being COA3/MITRAC12 and COX14. Interacts with COA3 and MT-CO1/COX1.

The protein resides in the mitochondrion membrane. Its function is as follows. Participates in the translocation of transit peptide-containing proteins across the mitochondrial inner membrane. Also required for assembly of mitochondrial respiratory chain complex I and complex IV as component of the MITRAC (mitochondrial translation regulation assembly intermediate of cytochrome c oxidase complex) complex. Probably shuttles between the presequence translocase and respiratory-chain assembly intermediates in a process that promotes incorporation of early nuclear-encoded subunits into these complexes. The chain is Mitochondrial import inner membrane translocase subunit Tim21 (Timm21) from Mus musculus (Mouse).